Here is a 68-residue protein sequence, read N- to C-terminus: MKANELRALDDAQLREKLAEYKVELFNLRFQKATGKLTNTARPRLVKKEIARILTILRERELAQAELG.

This sequence belongs to the universal ribosomal protein uL29 family.

The sequence is that of Large ribosomal subunit protein uL29 from Chloroflexus aurantiacus (strain ATCC 29364 / DSM 637 / Y-400-fl).